The primary structure comprises 227 residues: Class I hydrophobin 4 (227 aa).

An N-terminal signal peptide occupies residues 1-18 (MQFTTFALLAVAAATASA). Intrachain disulfides connect Cys159–Cys207, Cys167–Cys200, Cys168–Cys186, and Cys208–Cys222. Asn190 and Asn219 each carry an N-linked (GlcNAc...) asparagine glycan.

Belongs to the fungal hydrophobin family. In terms of assembly, self-assembles to form functional amyloid fibrils called rodlets. Self-assembly into fibrillar rodlets occurs spontaneously at hydrophobic:hydrophilic interfaces and the rodlets further associate laterally to form amphipathic monolayers. Expressed in conidia and aerial hyphae.

The protein localises to the secreted. Its subcellular location is the cell wall. Functionally, aerial growth, conidiation, and dispersal of filamentous fungi in the environment rely upon a capability of their secreting small amphipathic proteins called hydrophobins (HPBs) with low sequence identity. Class I can self-assemble into an outermost layer of rodlet bundles on aerial cell surfaces, conferring cellular hydrophobicity that supports fungal growth, development and dispersal; whereas Class II form highly ordered films at water-air interfaces through intermolecular interactions but contribute nothing to the rodlet structure. Hcf-4 is a class I hydrophobin that is involved in the development and germination of conidia. This chain is Class I hydrophobin 4, found in Passalora fulva (Tomato leaf mold).